The sequence spans 216 residues: Adenylate kinase (216 aa).

10–15 (GAGKGT) is an ATP binding site. Residues 30–59 (STGDMFRAAMKAETEMGLQAKSFIDKGALV) are NMP. Residues Thr31, Arg36, 57–59 (ALV), 85–88 (GFPR), and Gln92 each bind AMP. An LID region spans residues 126 to 163 (GRRICKECGATYHLEFNAPAKADVCDKCGGELYQRSDD). Arg127 contacts ATP. Residues Cys130 and Cys133 each coordinate Zn(2+). ATP is bound at residue 136–137 (TY). The Zn(2+) site is built by Cys150 and Cys153. Positions 160 and 171 each coordinate AMP. Gln199 contributes to the ATP binding site.

The protein belongs to the adenylate kinase family. As to quaternary structure, monomer.

It is found in the cytoplasm. The enzyme catalyses AMP + ATP = 2 ADP. Its pathway is purine metabolism; AMP biosynthesis via salvage pathway; AMP from ADP: step 1/1. In terms of biological role, catalyzes the reversible transfer of the terminal phosphate group between ATP and AMP. Plays an important role in cellular energy homeostasis and in adenine nucleotide metabolism. The protein is Adenylate kinase of Bacillus anthracis (strain A0248).